The sequence spans 741 residues: G2 and S phase-expressed protein 1 (741 aa).

S73 bears the Phosphoserine mark. Disordered regions lie at residues 101 to 120, 131 to 428, and 450 to 512; these read EVAQ…ETFV, EKEQ…KTVS, and FKVP…STRR. A compositionally biased stretch (polar residues) spans 106–120; it reads ATPQNPVNQGKETFV. Positions 131 to 147 are enriched in basic and acidic residues; sequence EKEQKRDRSPMSLKRET. Phosphoserine is present on residues S139, S153, S191, and S245. The segment covering 173–209 has biased composition (polar residues); that stretch reads SPVSAGPAQTQSNQGLPCSSQPLPRESSTSQPPSQAG. The span at 246-261 shows a compositional bias: polar residues; that stretch reads IQRTKLVNEKGSQSDV. Low complexity predominate over residues 310–321; that stretch reads SSTSGSASSLES. A Phosphoserine modification is found at S311. Residues 337-355 are compositionally biased toward polar residues; sequence QRSSIPASGSQRRTSTSKS. Low complexity predominate over residues 360–372; sequence PAASRQALPAAPA. The segment covering 398-408 has biased composition (polar residues); the sequence is SPLTQQPQTPE. The residue at position 460 (S460) is a Phosphoserine. T465 carries the phosphothreonine modification. Phosphoserine occurs at positions 476, 493, 509, and 514. The segment covering 478–497 has biased composition (low complexity); that stretch reads TPASRVVSSTPVRRSSGTTP. Position 518 is a phosphothreonine (T518). A phosphoserine mark is found at S521, S541, S582, and S599. Residues 550–640 are disordered; it reads LSSEPRRRST…VHGGGCSHTP (91 aa). Residues 578-593 are compositionally biased toward low complexity; sequence QGLSSDESSSPPSSVP. T696 is subject to Phosphothreonine. Residues S720, S726, and S736 each carry the phosphoserine modification.

Post-translationally, phosphorylated in mitosis.

The protein localises to the cytoplasm. Its subcellular location is the cytoskeleton. In terms of biological role, may be involved in p53-induced cell cycle arrest in G2/M phase by interfering with microtubule rearrangements that are required to enter mitosis. Overexpression delays G2/M phase progression. The sequence is that of G2 and S phase-expressed protein 1 (Gtse1) from Mus musculus (Mouse).